Reading from the N-terminus, the 274-residue chain is MGMKFFNPVTPSSRGTVLVSKVGLSKDEPEKSLTSGKKSSGGRNNHGRITTRHRGGGHKKKYRVIDFKRNRSGQGIVEKIEYDPNRSGFLALISYKEDDIKSYILAPQGMKPGDVVTAGNDADILPGNCLLLKHIPVGSFVHNVELKPGNGAAIARAAGCYAQIVGRDGQYVLLRLRSGQIRLILSSCKATIGVVSNPDHKNRKLGKAGRSRWLGIRPTVRGIAMNPVDHPHGGGEGKTSGGRHPVTPWGVATKGKKTRRRNKSSDKYIKQLKG.

2 disordered regions span residues 21 to 59 (KVGLSKDEPEKSLTSGKKSSGGRNNHGRITTRHRGGGHK) and 224 to 274 (AMNP…QLKG). A compositionally biased stretch (low complexity) spans 32–42 (SLTSGKKSSGG). Basic residues predominate over residues 45–59 (NHGRITTRHRGGGHK). Basic and acidic residues predominate over residues 263–274 (KSSDKYIKQLKG).

The protein belongs to the universal ribosomal protein uL2 family. As to quaternary structure, part of the 50S ribosomal subunit. Forms a bridge to the 30S subunit in the 70S ribosome.

Functionally, one of the primary rRNA binding proteins. Required for association of the 30S and 50S subunits to form the 70S ribosome, for tRNA binding and peptide bond formation. It has been suggested to have peptidyltransferase activity; this is somewhat controversial. Makes several contacts with the 16S rRNA in the 70S ribosome. This Wolbachia pipientis wMel protein is Large ribosomal subunit protein uL2.